A 507-amino-acid polypeptide reads, in one-letter code: Maturase K (507 aa).

It belongs to the intron maturase 2 family. MatK subfamily.

It is found in the plastid. The protein localises to the chloroplast. In terms of biological role, usually encoded in the trnK tRNA gene intron. Probably assists in splicing its own and other chloroplast group II introns. In Annona muricata (Soursop), this protein is Maturase K.